Reading from the N-terminus, the 281-residue chain is MKYIGAHVSASGGVDQAVIRAHEIKATAFALFTKNQRQWQAAPLSTEVIDRFKAACEQYAYTSAQILPHDSYLINLGHPDAEALEKSRIAFIDEMARCQQLGLSLLNFHPGSHLKQIEEADCLARIAESINIALAETDGVTAVIENTAGQGSNLGFRFEHLAAIIDGVEDKSRVGVCIDTCHAFAGGYDLRTEADCEATFAEFDRIVGFRYLRGMHLNDAKSAFASRVDRHHSLGEGNIGKTAFSYIMKDARFDGIPMILETINPDIWADEIAWLKSEAQC.

The Zn(2+) site is built by His69, His109, Glu145, Asp179, His182, His216, Asp229, His231, and Glu261.

Belongs to the AP endonuclease 2 family. It depends on Zn(2+) as a cofactor.

The enzyme catalyses Endonucleolytic cleavage to 5'-phosphooligonucleotide end-products.. In terms of biological role, endonuclease IV plays a role in DNA repair. It cleaves phosphodiester bonds at apurinic or apyrimidinic (AP) sites, generating a 3'-hydroxyl group and a 5'-terminal sugar phosphate. The protein is Probable endonuclease 4 of Pectobacterium carotovorum subsp. carotovorum (strain PC1).